Here is a 122-residue protein sequence, read N- to C-terminus: Large ribosomal subunit protein uL24 (122 aa).

The segment at 43-64 is disordered; it reads IRKHHRRDMPTPQGGTTKGGII.

It belongs to the universal ribosomal protein uL24 family. In terms of assembly, part of the 50S ribosomal subunit.

Functionally, one of two assembly initiator proteins, it binds directly to the 5'-end of the 23S rRNA, where it nucleates assembly of the 50S subunit. In terms of biological role, one of the proteins that surrounds the polypeptide exit tunnel on the outside of the subunit. The polypeptide is Large ribosomal subunit protein uL24 (Cutibacterium acnes (strain DSM 16379 / KPA171202) (Propionibacterium acnes)).